The sequence spans 449 residues: UNC93-like protein MFSD11 (449 aa).

The helical transmembrane segment at 8–28 threads the bilayer; that stretch reads LFNIIILGVAFMFMFTAFQTC. N-linked (GlcNAc...) asparagine glycosylation is present at Asn40. 5 helical membrane-spanning segments follow: residues 53 to 73, 74 to 94, 96 to 116, 138 to 158, and 170 to 190; these read AIIY…VAIV, GPQL…AVFI, PFPW…AVLW, IFWA…YFAW, and RTVF…FFLI. Phosphoserine is present on Ser204. The next 6 helical transmembrane spans lie at 239-259, 277-297, 309-329, 359-379, 385-405, and 410-430; these read MLLL…FSGV, LIGL…SLFG, PVVL…FLNM, FLLG…LGFL, APAF…AFFY, and LLHW…ISFF.

This sequence belongs to the unc-93 family.

The protein resides in the membrane. This chain is UNC93-like protein MFSD11 (MFSD11), found in Macaca fascicularis (Crab-eating macaque).